The primary structure comprises 314 residues: Aspartate carbamoyltransferase catalytic subunit (314 aa).

The carbamoyl phosphate site is built by arginine 58 and threonine 59. Lysine 86 is an L-aspartate binding site. Residues arginine 108, histidine 136, and glutamine 139 each contribute to the carbamoyl phosphate site. Residues arginine 169 and arginine 223 each contribute to the L-aspartate site. Carbamoyl phosphate contacts are provided by glycine 264 and proline 265.

The protein belongs to the aspartate/ornithine carbamoyltransferase superfamily. ATCase family. In terms of assembly, heterododecamer (2C3:3R2) of six catalytic PyrB chains organized as two trimers (C3), and six regulatory PyrI chains organized as three dimers (R2).

It catalyses the reaction carbamoyl phosphate + L-aspartate = N-carbamoyl-L-aspartate + phosphate + H(+). Its pathway is pyrimidine metabolism; UMP biosynthesis via de novo pathway; (S)-dihydroorotate from bicarbonate: step 2/3. Functionally, catalyzes the condensation of carbamoyl phosphate and aspartate to form carbamoyl aspartate and inorganic phosphate, the committed step in the de novo pyrimidine nucleotide biosynthesis pathway. The sequence is that of Aspartate carbamoyltransferase catalytic subunit from Roseobacter denitrificans (strain ATCC 33942 / OCh 114) (Erythrobacter sp. (strain OCh 114)).